The chain runs to 558 residues: uncharacterized protein (558 aa).

5 consecutive transmembrane segments (helical) span residues 15 to 32 (PSVT…ALGL), 39 to 61 (IGTI…HFGV), 76 to 95 (LVIF…FPSL), 104 to 126 (LISL…ILGI), and 166 to 188 (MALA…LALL). RCK C-terminal domains are found at residues 196–278 (EERD…LFGK) and 286–370 (RPDI…ILGD). The next 5 membrane-spanning stretches (helical) occupy residues 383–405 (LFGG…GVSM), 409–426 (LGLA…GAFG), 446–468 (FGII…DTII), 473–495 (LLWV…WASI), and 533–555 (VVYA…IMIL).

Belongs to the AAE transporter (TC 2.A.81) family.

It localises to the cell membrane. This is an uncharacterized protein from Porphyromonas gingivalis (strain ATCC BAA-308 / W83).